Here is a 75-residue protein sequence, read N- to C-terminus: Small ribosomal subunit protein bS18 (75 aa).

This sequence belongs to the bacterial ribosomal protein bS18 family. Part of the 30S ribosomal subunit. Forms a tight heterodimer with protein bS6.

In terms of biological role, binds as a heterodimer with protein bS6 to the central domain of the 16S rRNA, where it helps stabilize the platform of the 30S subunit. In Alteromonas mediterranea (strain DSM 17117 / CIP 110805 / LMG 28347 / Deep ecotype), this protein is Small ribosomal subunit protein bS18.